The following is a 288-amino-acid chain: UTP--glucose-1-phosphate uridylyltransferase (288 aa).

It belongs to the UDPGP type 2 family.

The catalysed reaction is alpha-D-glucose 1-phosphate + UTP + H(+) = UDP-alpha-D-glucose + diphosphate. It functions in the pathway glycolipid metabolism; diglucosyl-diacylglycerol biosynthesis. Its function is as follows. Catalyzes the formation of UDP-glucose from glucose-1-phosphate and UTP. This is an intermediate step in the biosynthesis of diglucosyl-diacylglycerol (Glc2-DAG), i.e. the predominant glycolipid found in the S.aureus membrane, which is also used as a membrane anchor for lipoteichoic acid (LTA). In Staphylococcus aureus (strain USA300), this protein is UTP--glucose-1-phosphate uridylyltransferase (gtaB).